Consider the following 3477-residue polypeptide: MANRRVGRGCWEVSPTERRPPAGLRGPAAEEEASSPPVLSLSHFCRSPFLCFGDVLLGASRTLSLALDNPNEEVAEVKISHFPAADLGFSVSQRCFVLQPKEKIVISVNWTPLKEGRVREIMTFLVNDVLKHQAILLGNAEEQKKKKRSLWDTIKKKKISASTSHNRRVSNIQNVNKTFSVSQKVDRVRSPLQACENLAMNEGGPPTENNSLILEENKIPISPISPAFNECHGATCLPLSVRRSTTYSSLHASENRELLNVHSANVSKVSFNEKAVTETSFNSVNVNGQRGENSKLSLTPNCSSTLNITQSQIHFLSPDSFVNNSHGANNELELVTCLSSDMFMKDNSQPVHLESTIAHEIYQKILSPDSFIKDNYGLNQDLESESVNPILSPNQFLKDNMAYMCTSQQTCKVPLSNENSQVPQSPEDWRKSEVSPRIPECQGSKSPKAIFEELVEMKSNYYSFIKQNNPKFSAVQDISSHSHNKQPKRRPILSATVTKRKATCTRENQTEINKPKAKRCLNSAVGEHEKVINNQKEKEDFHSYLPIIDPILSKSKSYKNEVTPSSTTASVARKRKSDGSMEDANVRVAITEHTEVREIKRIHFSPSEPKTSAVKKTKNVTTPISKRISNREKLNLKKKTDLSIFRTPISKTNKRTKPIIAVAQSSLTFIKPLKTDIPRHPMPFAAKNMFYDERWKEKQEQGFTWWLNFILTPDDFTVKTNISEVNAATLLLGIENQHKISVPRAPTKEEMSLRAYTARCRLNRLRRAACRLFTSEKMVKAIKKLEIEIEARRLIVRKDRHLWKDVGERQKVLNWLLSYNPLWLRIGLETTYGELISLEDNSDVTGLAMFILNRLLWNPDIAAEYRHPTVPHLYRDGHEEALSKFTLKKLLLLVCFLDYAKISRLIDHDPCLFCKDAEFKASKEILLAFSRDFLSGEGDLSRHLGLLGLPVNHVQTPFDEFDFAVTNLAVDLQCGVRLVRTMELLTQNWDLSKKLRIPAISRLQKMHNVDIVLQVLKSRGIELSDEHGNTILSKDIVDRHREKTLRLLWKIAFAFQVDISLNLDQLKEEIAFLKHTKSIKKTISLLSCHSDDLINKKKGKRDSGSFEQYSENIKLLMDWVNAVCAFYNKKVENFTVSFSDGRVLCYLIHHYHPCYVPFDAICQRTTQTVECTQTGSVVLNSSSESDDSSLDMSLKAFDHENTSELYKELLENEKKNFHLVRSAVRDLGGIPAMINHSDMSNTIPDEKVVITYLSFLCARLLDLRKEIRAARLIQTTWRKYKLKTDLKRHQEREKAARIIQLAVINFLAKQRLRKRVNAALVIQKYWRRVLAQRKLLMLKKEKLEKVQNKAASLIQGYWRRYSTRQRFLKLKYYSIILQSRIRMIIAVTSYKRYLWATVTIQRHWRAYLRRKQDQQRYEMLKSSTLIIQSMFRKWKQRKMQSQVKATVILQRAFREWHLRKQAKEENSAIIIQSWYRMHKELRKYIYIRSCVVIIQKRFRCFQAQKLYKRRKESILTIQKYYKAYLKGKIERTNYLQKRAAAIQLQAAFRRLKAHNLCRQIRAACVIQSYWRMRQDRVRFLNLKKTIIKFQAHVRKHQQRQKYKKMKKAAVIIQTHFRAYIFAMKVLASYQKTRSAVIVLQSAYRGMQARKMYIHILTSVIKIQSYYRAYVSKKEFLSLKNATIKLQSTVKMKQTRKQYLHLRAAALFIQQCYRSKKIAAQKREEYMQMRESCIKLQAFVRGYLVRKQMRLQRKAVISLQSYFRMRKARQYYLKMYKAIIVIQNYYHAYKAQVNQRKNFLQVKKAATCLQAAYRGYKVRQLIKQQSIAALKIQSAFRGYNKRVKYQSVLQSIIKIQRWYRAYKTLHDTRTHFLKTKAAVISLQSAYRGWKVRKQIRREHQAALKIQSAFRMAKAQKQFRLFKTAALVIQQNFRAWTAGRKQCMEYIELRHAVLVLQSMWKGKTLRRQLQRQHKCAIIIQSYYRMHVQQKKWKIMKKAALLIQKYYRAYSIGREQNHLYLKTKAAVVTLQSAYRGMKVRKRIKDCNKAAVTIQSKYRAYKTKKKYATYRASAIIIQRWYRGIKITNHQHKEYLNLKKTAIKIQSVYRGIRVRRHIQHMHRAATFIKAMFKMHQSRISYHTMRKAAIVIQVRCRAYYQGKMQREKYLTILKAVKVLQASFRGVRVRRTLRKMQTAATLIQSNYRRYRQQTYFNKLKKITKTVQQRYWAMKERNIQFQRYNKLRHSVIYIQAIFRGKKARRHLKMMHIAATLIQRRFRTLMMRRRFLSLKKTAILIQRKYRAHLCTKHHLQFLQVQNAVIKIQSSYRRWMIRKRMREMHRAATFIQSTFRMHRLHMRYQALKQASVVIQQQYQANRAAKLQRQHYLRQRHSAVILQAAFRGMKTRRHLKSMHSSATLIQSRFRSLLVRRRFISLKKATIFVQRKYRATICAKHKLYQFLHLRKAAITIQSSYRRLMVKKKLQEMQRAAVLIQATFRMYRTYITFQTWKHASILIQQHYRTYRAAKLQRENYIRQWHSAVVIQAAYKGMKARQLLREKHKASIVIQSTYRMYRQYCFYQKLQWATKIIQEKYRANKKKQKVFQHNELKKETCVQAGFQDMNIKKQIQEQHQAAIIIQKHCKAFKIRKHYLHLRATVVSIQRRYRKLTAVRTQAVICIQSYYRGFKVRKDIQNMHRAATLIQSFYRMHRAKVDYETKKTAIVVIQNYYRLYVRVKTERKNFLAVQKSVRTIQAAFRGMKVRQKLKNVSEEKMAAIVNQSALCCYRSKTQYEAVQSEGVMIQEWYKASGLACSQEAEYHSQSRAAVTIQKAFCRMVTRKLETQKCAALRIQFFLQMAVYRRRFVQQKRAAITLQHYFRTWQTRKQFLLYRKAAVVLQNHYRAFLSAKHQRQVYLQIRSSVIIIQARSKGFIQKRKFQEIKNSTIKIQAMWRRYRAKKYLCKVKAACKIQAWYRCWRAHKEYLAILKAVKIIQGCFYTKLERTRFLNVRASAIIIQRKWRAILPAKIAHEHFLMIKRHRAACLIQAHYRGYKGRQVFLRQKSAALIIQKYIRAREAGKHERIKYIEFKKSTVILQALVRGWLVRKRFLEQRAKIRLLHFTAAAYYHLNAVRIQRAYKLYLAVKNANKQVNSVICIQRWFRARLQEKRFIQKYHSIKKIEHEGQECLSQRNRAASVIQKAVRHFLLRKKQEKFTSGIIKIQALWRGYSWRKKNDCTKIKAIRLSLQVVNREIREENKLYKRTALALHYLLTYKHLSAILEALKHLEVVTRLSPLCCENMAQSGAISKIFVLIRSCNRSIPCMEVIRYAVQVLLNVSKYEKTTSAVYDVENCIDILLELLQIYREKPGNKVADKGGSIFTKTCCLLAILLKTTNRASDVRSRSKVVDRIYSLYKLTAHKHKMNTERILYKQKKNSSISIPFIPETPVRTRIVSRLKPDWVLRRDNMEEITNPLQAIQMVMDTLGIPY.

The interval 1–30 (MANRRVGRGCWEVSPTERRPPAGLRGPAAE) is disordered. Phosphoserine occurs at positions 280, 283, 367, and 392. A sufficient for interaction with KATNA1:KATNB1 region spans residues 308–409 (ITQSQIHFLS…NMAYMCTSQQ (102 aa)). Polar residues predominate over residues 415-424 (LSNENSQVPQ). Disordered regions lie at residues 415-443 (LSNE…ECQG) and 559-581 (KNEV…DGSM). Residue S425 is modified to Phosphoserine. Residues 560–570 (NEVTPSSTTAS) show a composition bias toward polar residues. S605 bears the Phosphoserine mark. The Calponin-homology (CH) 1 domain occupies 920-1056 (KASKEILLAF…LLWKIAFAFQ (137 aa)). A coiled-coil region spans residues 1057–1078 (VDISLNLDQLKEEIAFLKHTKS). Residue S1103 is modified to Phosphoserine. A Calponin-homology (CH) 2 domain is found at 1110–1261 (SENIKLLMDW…YLSFLCARLL (152 aa)). 39 IQ domains span residues 1347 to 1378 (QNKA…IILQ), 1393 to 1422 (YLWA…MLKS), 1582 to 1613 (LKKT…VIIQ), 1632 to 1661 (TRSA…SVIK), 1655 to 1684 (ILTS…ATIK), 1728 to 1757 (MRES…AVIS), 1751 to 1782 (QRKA…IVIQ), 1801 to 1830 (VKKA…AALK), 1824 to 1853 (QSIA…SIIK), 1874 to 1903 (TKAA…AALK), 1897 to 1928 (EHQA…LVIQ), 1947 to 1978 (LRHA…IIIQ), 1970 to 2001 (QHKC…LLIQ), 2020 to 2049 (TKAA…AAVT), 2043 to 2074 (CNKA…IIIQ), 2093 to 2124 (LKKT…TFIK), 2116 to 2147 (MHRA…IVIQ), 2166 to 2197 (ILKA…TLIQ), 2189 to 2218 (MQTA…ITKT), 2239 to 2270 (LRHS…TLIQ), 2262 to 2293 (MHIA…ILIQ), 2311 to 2342 (VQNA…TFIQ), 2334 to 2365 (MHRA…VVIQ), 2384 to 2415 (QRHS…TLIQ), 2407 to 2438 (MHSS…IFVQ), 2457 to 2488 (LRKA…VLIQ), 2530 to 2561 (QWHS…IVIQ), 2624 to 2653 (QHQA…TVVS), 2665 to 2696 (RTQA…TLIQ), 2688 to 2719 (MHRA…VVIQ), 2738 to 2767 (VQKS…EKMA), 2859 to 2890 (QKRA…VVLQ), 2909 to 2938 (IRSS…STIK), 2932 to 2963 (IKNS…KIQA), 2954 to 2985 (KVKA…KIIQ), 3029 to 3060 (RHRA…LIIQ), 3079 to 3110 (FKKS…RLLH), 3181 to 3210 (RNRA…GIIK), and 3204 to 3235 (FTSG…IRLS).

Interacts with KATNA1 and KATNB1; katanin complex formation KATNA1:KATNB1 is required for the association.

It localises to the cytoplasm. It is found in the cytoskeleton. The protein resides in the spindle. Its subcellular location is the nucleus. Functionally, involved in mitotic spindle regulation and coordination of mitotic processes. The function in regulating microtubule dynamics at spindle poles including spindle orientation, astral microtubule density and poleward microtubule flux seems to depend on the association with the katanin complex formed by KATNA1 and KATNB1. Enhances the microtubule lattice severing activity of KATNA1 by recruiting the katanin complex to microtubules. Can block microtubule minus-end growth and reversely this function can be enhanced by the katanin complex. May have a preferential role in regulating neurogenesis. The protein is Abnormal spindle-like microcephaly-associated protein (ASPM) of Homo sapiens (Human).